The sequence spans 350 residues: Olfactory receptor 52I2 (350 aa).

Over 1–55 (MCQQILRDCILLIHHLCINRKKVSLVMLGPAYNHTMETPASFLLVGIPGLQSSHL) the chain is Extracellular. N-linked (GlcNAc...) asparagine glycosylation occurs at Asn-33. A helical transmembrane segment spans residues 56 to 76 (WLAISLSAMYIIALLGNTIIV). Residues 77 to 84 (TAIWMDST) are Cytoplasmic-facing. The helical transmembrane segment at 85 to 105 (RHEPMYCFLCVLAAVDIVMAS) threads the bilayer. Topologically, residues 106-129 (SVVPKMVSIFCSGDSSISFSACFT) are extracellular. A disulfide bridge connects residues Cys-127 and Cys-219. The chain crosses the membrane as a helical span at residues 130–150 (QMFFVHLATAVETGLLLTMAF). The Cytoplasmic segment spans residues 151–169 (DRYVAICKPLHYKRILTPQ). A helical membrane pass occupies residues 170–190 (VMLGMSMAITIRAIIAITPLS). The Extracellular portion of the chain corresponds to 191-226 (WMVSHLPFCGSNVVVHSYCEHIALARLACADPVPSS). Residues 227-247 (LYSLIGSSLMVGSDVAFIAAS) traverse the membrane as a helical segment. Residues 248–267 (YILILKAVFGLSSKTAQLKA) are Cytoplasmic-facing. A helical transmembrane segment spans residues 268–288 (LSTCGSHVGVMALYYLPGMAS). The Extracellular segment spans residues 289 to 304 (IYAAWLGQDVVPLHTQ). A helical transmembrane segment spans residues 305-325 (VLLADLYVIIPATLNPIIYGM). The Cytoplasmic portion of the chain corresponds to 326–350 (RTKQLRERIWSYLMHVLFDHSNLGS).

It belongs to the G-protein coupled receptor 1 family.

The protein resides in the cell membrane. Odorant receptor. This chain is Olfactory receptor 52I2 (OR52I2), found in Homo sapiens (Human).